Reading from the N-terminus, the 567-residue chain is TGF-beta receptor type-2 (567 aa).

Positions 1–23 (MGRGLLRGLWPLHIVLWTRIAST) are cleaved as a signal peptide. The Extracellular portion of the chain corresponds to 24 to 166 (IPPHVPKSVN…SPDLLLVIIQ (143 aa)). 6 disulfides stabilise this stretch: Cys51/Cys84, Cys54/Cys71, Cys61/Cys67, Cys77/Cys101, Cys121/Cys136, and Cys138/Cys143. 2 N-linked (GlcNAc...) asparagine glycosylation sites follow: Asn70 and Asn94. Residues 167-187 (VTGVSLLPPLGIAIAVIAIFY) traverse the membrane as a helical segment. The Cytoplasmic portion of the chain corresponds to 188–567 (CYRVHRQQKL…PEDGSLNTTK (380 aa)). One can recognise a Protein kinase domain in the interval 244 to 546 (IELDTLVGKG…RFSELEHPDR (303 aa)). Residues 250–258 (VGKGRFAEV) and Lys277 contribute to the ATP site. Asp379 acts as the Proton acceptor in catalysis. A phosphoserine mark is found at Ser409, Ser548, and Ser553. Residues 546-567 (RLSGRSCSQEKIPEDGSLNTTK) are disordered.

The protein belongs to the protein kinase superfamily. TKL Ser/Thr protein kinase family. TGFB receptor subfamily. As to quaternary structure, homodimer. Heterohexamer; TGFB1, TGFB2 and TGFB3 homodimeric ligands assemble a functional receptor composed of two TGFBR1 and TGFBR2 heterodimers to form a ligand-receptor heterohexamer. The respective affinity of TGFRB1 and TGFRB2 for the ligands may modulate the kinetics of assembly of the receptor and may explain the different biological activities of TGFB1, TGFB2 and TGFB3. Component of a complex composed of TSC22D1 (via N-terminus), TGFBR1 and TGFBR2; the interaction between TSC22D1 and TGFBR1 is inhibited by SMAD7 and promoted by TGFB1. Interacts with DAXX. Interacts with DYNLT4. Interacts with ZFYVE9; ZFYVE9 recruits SMAD2 and SMAD3 to the TGF-beta receptor. Interacts with and is activated by SCUBE3; this interaction does not affect TGFB1-binding to TGFBR2. Interacts with VPS39; this interaction is independent of the receptor kinase activity and of the presence of TGF-beta. Interacts with CLU. The cofactor is Mg(2+). Requires Mn(2+) as cofactor. Phosphorylated on a Ser/Thr residue in the cytoplasmic domain.

It is found in the cell membrane. The protein resides in the membrane raft. It carries out the reaction L-threonyl-[receptor-protein] + ATP = O-phospho-L-threonyl-[receptor-protein] + ADP + H(+). It catalyses the reaction L-seryl-[receptor-protein] + ATP = O-phospho-L-seryl-[receptor-protein] + ADP + H(+). Its function is as follows. Transmembrane serine/threonine kinase forming with the TGF-beta type I serine/threonine kinase receptor, TGFBR1, the non-promiscuous receptor for the TGF-beta cytokines TGFB1, TGFB2 and TGFB3. Transduces the TGFB1, TGFB2 and TGFB3 signal from the cell surface to the cytoplasm and is thus regulating a plethora of physiological and pathological processes including cell cycle arrest in epithelial and hematopoietic cells, control of mesenchymal cell proliferation and differentiation, wound healing, extracellular matrix production, immunosuppression and carcinogenesis. The formation of the receptor complex composed of 2 TGFBR1 and 2 TGFBR2 molecules symmetrically bound to the cytokine dimer results in the phosphorylation and the activation of TGFRB1 by the constitutively active TGFBR2. Activated TGFBR1 phosphorylates SMAD2 which dissociates from the receptor and interacts with SMAD4. The SMAD2-SMAD4 complex is subsequently translocated to the nucleus where it modulates the transcription of the TGF-beta-regulated genes. This constitutes the canonical SMAD-dependent TGF-beta signaling cascade. Also involved in non-canonical, SMAD-independent TGF-beta signaling pathways. The sequence is that of TGF-beta receptor type-2 (Tgfbr2) from Rattus norvegicus (Rat).